The primary structure comprises 350 residues: CMP-N-acetylneuraminate-beta-galactosamide-alpha-2,3-sialyltransferase 2 (350 aa).

The Cytoplasmic portion of the chain corresponds to 1-6 (MKCSLR). The helical; Signal-anchor for type II membrane protein transmembrane segment at 7 to 27 (VWFLSMAFLLVFIMSLLFTYS) threads the bilayer. The Lumenal segment spans residues 28–350 (HHSMATLPYL…ASKIEVYRGN (323 aa)). 3 disulfide bridges follow: C70–C75, C72–C149, and C152–C291. Residues Q116, N157, and N180 each coordinate substrate. N211 is a glycosylation site (N-linked (GlcNAc...) asparagine). Substrate is bound by residues Y240, Y276, G280, G300, H309, and H326.

Belongs to the glycosyltransferase 29 family. In terms of assembly, homodimer; disulfide-linked. Homodimer formation occurs in the endoplasmic reticulum. The soluble form derives from the membrane form by proteolytic processing. Post-translationally, N-glycosylated; necessary for proper exit from endoplasmic reticulum and trafficking to the Golgi apparatus. In terms of tissue distribution, strongly expressed in brain and liver and to a lesser extent in heart and kidney. Scarcely detectable in lung, pancreas, spleen and submaxillary gland. Expressed in L5 dorsal root ganglion (DRG) neurons (at protein level).

The protein localises to the golgi apparatus. Its subcellular location is the golgi stack membrane. The protein resides in the secreted. The catalysed reaction is a beta-D-galactosyl-(1-&gt;3)-N-acetyl-alpha-D-galactosaminyl derivative + CMP-N-acetyl-beta-neuraminate = an N-acetyl-alpha-neuraminyl-(2-&gt;3)-beta-D-galactosyl-(1-&gt;3)-N-acetyl-alpha-D-galactosaminyl derivative + CMP + H(+). It carries out the reaction a ganglioside GM1 (d18:1(4E)) + CMP-N-acetyl-beta-neuraminate = a ganglioside GD1a (d18:1(4E)) + CMP + H(+). It catalyses the reaction ganglioside GM1 (d18:1(4E)/18:0) + CMP-N-acetyl-beta-neuraminate = ganglioside GD1a (18:1(4E)/18:0) + CMP + H(+). The enzyme catalyses a ganglioside GA1 + CMP-N-acetyl-beta-neuraminate = a ganglioside GM1b + CMP + H(+). The catalysed reaction is a ganglioside GA1 (d18:1(4E)) + CMP-N-acetyl-beta-neuraminate = a ganglioside GM1b (d18:1(4E)) + CMP + H(+). It carries out the reaction a ganglioside GD1b + CMP-N-acetyl-beta-neuraminate = a ganglioside GT1b + CMP + H(+). It catalyses the reaction a ganglioside GD1b (d18:1(4E)) + CMP-N-acetyl-beta-neuraminate = a ganglioside GT1b (d18:1(4E)) + CMP + H(+). The enzyme catalyses a globoside GalGb4Cer + CMP-N-acetyl-beta-neuraminate = a globoside MSGG + CMP + H(+). The protein operates within protein modification; protein glycosylation. It functions in the pathway glycolipid biosynthesis. Functionally, a beta-galactoside alpha2-3 sialyltransferase primarily involved in terminal sialylation of ganglio and globo series glycolipids. Catalyzes the transfer of sialic acid (N-acetyl-neuraminic acid; Neu5Ac) from the nucleotide sugar donor CMP-Neu5Ac onto acceptor Galbeta-(1-&gt;3)-GalNAc-terminated glycoconjugates through an alpha2-3 linkage. Sialylates GM1/GM1a, GA1/asialo-GM1 and GD1b gangliosides to form GD1a, GM1b and GT1b, respectively. Together with ST3GAL3, primarily responsible for biosynthesis of brain GD1a and GT1b that function as ligands for myelin-associated glycoprotein MAG on axons, regulating MAG expression and axonal myelin stability and regeneration. Via GT1b regulates TLR2 signaling in spinal cord microglia in response to nerve injury. Responsible for the sialylation of the pluripotent stem cell- and cancer stem cell-associated antigen SSEA3, forming SSEA4. Sialylates with low efficiency asialofetuin, presumably onto O-glycosidically linked Galbeta-(1-&gt;3)-GalNAc-O-Ser. The sequence is that of CMP-N-acetylneuraminate-beta-galactosamide-alpha-2,3-sialyltransferase 2 from Mus musculus (Mouse).